A 185-amino-acid polypeptide reads, in one-letter code: Ribosome maturation factor RimM (185 aa).

Positions 106–185 (TGDYYWKDLI…TIEVDWDPGF (80 aa)) constitute a PRC barrel domain.

The protein belongs to the RimM family. As to quaternary structure, binds ribosomal protein uS19.

It localises to the cytoplasm. An accessory protein needed during the final step in the assembly of 30S ribosomal subunit, possibly for assembly of the head region. Essential for efficient processing of 16S rRNA. May be needed both before and after RbfA during the maturation of 16S rRNA. It has affinity for free ribosomal 30S subunits but not for 70S ribosomes. This Photorhabdus laumondii subsp. laumondii (strain DSM 15139 / CIP 105565 / TT01) (Photorhabdus luminescens subsp. laumondii) protein is Ribosome maturation factor RimM.